We begin with the raw amino-acid sequence, 812 residues long: Probable inorganic carbon transporter subunit DabA (812 aa).

Residues Cys-337, Asp-339, His-499, and Cys-514 each coordinate Zn(2+).

It belongs to the inorganic carbon transporter (TC 9.A.2) DabA family. As to quaternary structure, forms a complex with DabB. The cofactor is Zn(2+).

It localises to the cell inner membrane. Its function is as follows. Part of an energy-coupled inorganic carbon pump. The chain is Probable inorganic carbon transporter subunit DabA from Xanthomonas euvesicatoria pv. vesicatoria (strain 85-10) (Xanthomonas campestris pv. vesicatoria).